Reading from the N-terminus, the 176-residue chain is Co-chaperone protein HscB homolog (176 aa).

Positions 7 to 79 (THFSLFGLPE…LKRATYLLHL (73 aa)) constitute a J domain.

Belongs to the HscB family. In terms of assembly, interacts with HscA and stimulates its ATPase activity.

In terms of biological role, co-chaperone involved in the maturation of iron-sulfur cluster-containing proteins. Seems to help targeting proteins to be folded toward HscA. The polypeptide is Co-chaperone protein HscB homolog (Ralstonia nicotianae (strain ATCC BAA-1114 / GMI1000) (Ralstonia solanacearum)).